Consider the following 124-residue polypeptide: Ribonuclease pancreatic (124 aa).

The segment covering 1-13 (KESAAAKFERQHM) has biased composition (basic and acidic residues). The interval 1 to 23 (KESAAAKFERQHMDPSASSISSS) is disordered. Residues Lys7 and Arg10 each contribute to the substrate site. His12 serves as the catalytic Proton acceptor. 4 disulfides stabilise this stretch: Cys26-Cys84, Cys40-Cys95, Cys58-Cys110, and Cys65-Cys72. Asn34 carries an N-linked (GlcNAc...) asparagine glycan. Residues 41–45 (KPVNT), Lys66, and Arg85 contribute to the substrate site. The active-site Proton donor is the His119.

It belongs to the pancreatic ribonuclease family. In terms of assembly, monomer. Interacts with and forms tight 1:1 complexes with RNH1. Dimerization of two such complexes may occur. Interaction with RNH1 inhibits this protein. As to expression, pancreas.

It is found in the secreted. It catalyses the reaction an [RNA] containing cytidine + H2O = an [RNA]-3'-cytidine-3'-phosphate + a 5'-hydroxy-ribonucleotide-3'-[RNA].. It carries out the reaction an [RNA] containing uridine + H2O = an [RNA]-3'-uridine-3'-phosphate + a 5'-hydroxy-ribonucleotide-3'-[RNA].. In terms of biological role, endonuclease that catalyzes the cleavage of RNA on the 3' side of pyrimidine nucleotides. Acts on single-stranded and double-stranded RNA. This is Ribonuclease pancreatic (RNASE1) from Alces alces alces (European moose).